The chain runs to 395 residues: Chorismate synthase (395 aa).

The NADP(+) site is built by Arg40 and Arg46. FMN is bound by residues 134–136, 256–257, Gly301, 316–320, and Arg342; these read RAS, QA, and KPIST.

It belongs to the chorismate synthase family. Homotetramer. It depends on FMNH2 as a cofactor.

It carries out the reaction 5-O-(1-carboxyvinyl)-3-phosphoshikimate = chorismate + phosphate. Its pathway is metabolic intermediate biosynthesis; chorismate biosynthesis; chorismate from D-erythrose 4-phosphate and phosphoenolpyruvate: step 7/7. In terms of biological role, catalyzes the anti-1,4-elimination of the C-3 phosphate and the C-6 proR hydrogen from 5-enolpyruvylshikimate-3-phosphate (EPSP) to yield chorismate, which is the branch point compound that serves as the starting substrate for the three terminal pathways of aromatic amino acid biosynthesis. This reaction introduces a second double bond into the aromatic ring system. In Beutenbergia cavernae (strain ATCC BAA-8 / DSM 12333 / CCUG 43141 / JCM 11478 / NBRC 16432 / NCIMB 13614 / HKI 0122), this protein is Chorismate synthase.